A 386-amino-acid chain; its full sequence is IgA receptor (386 aa).

The signal sequence occupies residues 1–41; the sequence is MARKDTNKQYSLRKLKTGTASVAVAVAVLGAGFANQTEVKA. An igA-binding region spans residues 42-152; that stretch reads AEIKKPQADS…QKKHQQEQQQ (111 aa). 7 stretches are compositionally biased toward basic and acidic residues: residues 79–88, 97–128, 134–166, 174–201, 209–221, 233–243, and 251–267; these read YADDKEKDPQ, QDLR…EQLE, EADK…DKQI, LSRD…EKQI, LSRD…EAKK, EHQKLKEDKQI, and LSRD…KVEA. Disordered regions lie at residues 79-221 and 233-268; these read YADD…EAKK and EHQK…VEAD. 3 C repeats span residues 158–192, 193–227, and 235–269; these read QKLA…EAEH and QKLK…EADL. D repeat units follow at residues 302–307, 308–313, 316–321, and 323–328; these read ARLEAE, AKALKE, AKQAEE, and AKLKGN. The tract at residues 323–360 is disordered; the sequence is AKLKGNQTPNAKVAPQANRSRSAMTQQKRTLPSTGETA. Positions 339–359 are enriched in polar residues; sequence ANRSRSAMTQQKRTLPSTGET. An LPXTG sorting signal motif is present at residues 353–357; it reads LPSTG. The residue at position 356 (T356) is a Pentaglycyl murein peptidoglycan amidated threonine. A propeptide spans 357–386 (removed by sortase); it reads GETANPFFTAAAATVMVSAGMLALKRKEEN.

Belongs to the M protein family.

Its subcellular location is the secreted. The protein localises to the cell wall. In terms of biological role, binds IgA of both subclasses, and also binds polyclonal IgG weakly. The chain is IgA receptor (arp4) from Streptococcus pyogenes.